The sequence spans 304 residues: MNYLGGFFMKNLLSMEDLTNEEILSLVKRALELKKRAENKKRNDLFVANLFFENSTRTKKSFEVAEKKLNLNVVDFEVSTSSVQKGETLYDTCKTLEMIGINMLVIRHSENEYYKQLENLKIPIINGGDGSGEHPSQCLLDIMTIYETYGKFDGLNIIIVGDIKNSRVARSNKKALTRLGAKVTFVAPEIWKDESLGEFVNFDDVIDKVDICMLLRVQHERHTDSKEKREFSKENYHKSFGLTEERYKRLKEGAIIMHPAPVNRDVEIADSLVESEKSRIFEQMRNGMFMRQAILEYIIEKNKL.

Positions 57 and 58 each coordinate carbamoyl phosphate. Lysine 85 is a binding site for L-aspartate. Positions 107, 134, and 137 each coordinate carbamoyl phosphate. The L-aspartate site is built by arginine 167 and arginine 216. The carbamoyl phosphate site is built by alanine 260 and proline 261.

The protein belongs to the aspartate/ornithine carbamoyltransferase superfamily. ATCase family. As to quaternary structure, heterododecamer (2C3:3R2) of six catalytic PyrB chains organized as two trimers (C3), and six regulatory PyrI chains organized as three dimers (R2).

The enzyme catalyses carbamoyl phosphate + L-aspartate = N-carbamoyl-L-aspartate + phosphate + H(+). The protein operates within pyrimidine metabolism; UMP biosynthesis via de novo pathway; (S)-dihydroorotate from bicarbonate: step 2/3. In terms of biological role, catalyzes the condensation of carbamoyl phosphate and aspartate to form carbamoyl aspartate and inorganic phosphate, the committed step in the de novo pyrimidine nucleotide biosynthesis pathway. This chain is Aspartate carbamoyltransferase catalytic subunit, found in Fusobacterium nucleatum subsp. nucleatum (strain ATCC 25586 / DSM 15643 / BCRC 10681 / CIP 101130 / JCM 8532 / KCTC 2640 / LMG 13131 / VPI 4355).